Reading from the N-terminus, the 176-residue chain is Putative Ras-related protein RABA4e (176 aa).

It belongs to the small GTPase superfamily. Rab family.

This is Putative Ras-related protein RABA4e (RABA4E) from Arabidopsis thaliana (Mouse-ear cress).